A 218-amino-acid polypeptide reads, in one-letter code: Small ribosomal subunit protein uS3c (218 aa).

The region spanning 47 to 118 is the KH type-2 domain; that stretch reads VQKEMRISSG…RLNVVITRVA (72 aa).

Belongs to the universal ribosomal protein uS3 family. In terms of assembly, part of the 30S ribosomal subunit.

It is found in the plastid. The protein resides in the chloroplast. In Ceratophyllum demersum (Rigid hornwort), this protein is Small ribosomal subunit protein uS3c (rps3).